We begin with the raw amino-acid sequence, 264 residues long: S-adenosylmethionine decarboxylase proenzyme (264 aa).

The active-site Schiff-base intermediate with substrate; via pyruvic acid is the S112. The residue at position 112 (S112) is a Pyruvic acid (Ser); by autocatalysis. The Proton acceptor; for processing activity role is filled by H117. The active-site Proton donor; for catalytic activity is the C140.

This sequence belongs to the prokaryotic AdoMetDC family. Type 2 subfamily. Heterooctamer of four alpha and four beta chains arranged as a tetramer of alpha/beta heterodimers. Pyruvate serves as cofactor. In terms of processing, is synthesized initially as an inactive proenzyme. Formation of the active enzyme involves a self-maturation process in which the active site pyruvoyl group is generated from an internal serine residue via an autocatalytic post-translational modification. Two non-identical subunits are generated from the proenzyme in this reaction, and the pyruvate is formed at the N-terminus of the alpha chain, which is derived from the carboxyl end of the proenzyme. The post-translation cleavage follows an unusual pathway, termed non-hydrolytic serinolysis, in which the side chain hydroxyl group of the serine supplies its oxygen atom to form the C-terminus of the beta chain, while the remainder of the serine residue undergoes an oxidative deamination to produce ammonia and the pyruvoyl group blocking the N-terminus of the alpha chain.

The catalysed reaction is S-adenosyl-L-methionine + H(+) = S-adenosyl 3-(methylsulfanyl)propylamine + CO2. Its pathway is amine and polyamine biosynthesis; S-adenosylmethioninamine biosynthesis; S-adenosylmethioninamine from S-adenosyl-L-methionine: step 1/1. Functionally, catalyzes the decarboxylation of S-adenosylmethionine to S-adenosylmethioninamine (dcAdoMet), the propylamine donor required for the synthesis of the polyamines spermine and spermidine from the diamine putrescine. The polypeptide is S-adenosylmethionine decarboxylase proenzyme (Shigella dysenteriae serotype 1 (strain Sd197)).